The chain runs to 337 residues: Bifunctional methylenetetrahydrofolate dehydrogenase/cyclohydrolase, mitochondrial (337 aa).

The transit peptide at 1-30 (MATALCPLRALGQTAFRPRTRRLHLSAPRA) directs the protein to the mitochondrion. Substrate is bound by residues 79 to 83 (YVLNK) and 126 to 128 (VQL). NAD(+)-binding positions include 195–197 (GRS) and R228. A substrate-binding site is contributed by 304 to 308 (PGGVG).

It belongs to the tetrahydrofolate dehydrogenase/cyclohydrolase family. Mg(2+) serves as cofactor.

It localises to the mitochondrion. It catalyses the reaction (6R)-5,10-methylene-5,6,7,8-tetrahydrofolate + NAD(+) = (6R)-5,10-methenyltetrahydrofolate + NADH. The catalysed reaction is (6R)-5,10-methenyltetrahydrofolate + H2O = (6R)-10-formyltetrahydrofolate + H(+). Its function is as follows. Although its dehydrogenase activity is NAD-specific, it can also utilize NADP at a reduced efficiency. The protein is Bifunctional methylenetetrahydrofolate dehydrogenase/cyclohydrolase, mitochondrial (MTHFD2) of Gallus gallus (Chicken).